We begin with the raw amino-acid sequence, 129 residues long: Phosphoribosyl-AMP cyclohydrolase (129 aa).

Asp-86 lines the Mg(2+) pocket. Cys-87 is a binding site for Zn(2+). Mg(2+)-binding residues include Asp-88 and Asp-90. 2 residues coordinate Zn(2+): Cys-104 and Cys-111.

This sequence belongs to the PRA-CH family. In terms of assembly, homodimer. Requires Mg(2+) as cofactor. Zn(2+) is required as a cofactor.

Its subcellular location is the cytoplasm. It carries out the reaction 1-(5-phospho-beta-D-ribosyl)-5'-AMP + H2O = 1-(5-phospho-beta-D-ribosyl)-5-[(5-phospho-beta-D-ribosylamino)methylideneamino]imidazole-4-carboxamide. It functions in the pathway amino-acid biosynthesis; L-histidine biosynthesis; L-histidine from 5-phospho-alpha-D-ribose 1-diphosphate: step 3/9. Its function is as follows. Catalyzes the hydrolysis of the adenine ring of phosphoribosyl-AMP. The sequence is that of Phosphoribosyl-AMP cyclohydrolase from Ignicoccus hospitalis (strain KIN4/I / DSM 18386 / JCM 14125).